Here is a 161-residue protein sequence, read N- to C-terminus: Early E3 17.7 kDa glycoprotein (161 aa).

N-linked (GlcNAc...) asparagine; by host glycans are attached at residues Asn-14 and Asn-87. A helical transmembrane segment spans residues 102–129; it reads IINPAIFLFLHVLTLVIVLAMAAEVIYN.

It localises to the host membrane. The chain is Early E3 17.7 kDa glycoprotein from Murine adenovirus A serotype 1 (MAdV-1).